The primary structure comprises 106 residues: MNDSEFHRLADQLWLTIEERLDYWDGDSDIDCEINGGVLTITFENGSKIIINRQEPLHQVWLATKQGGYHFDLKGDEWICDRSGETFWDLLEQAATQQAGETVSFR.

Belongs to the frataxin family.

In terms of biological role, involved in iron-sulfur (Fe-S) cluster assembly. May act as a regulator of Fe-S biogenesis. This chain is Iron-sulfur cluster assembly protein CyaY, found in Escherichia coli O9:H4 (strain HS).